Here is a 152-residue protein sequence, read N- to C-terminus: Transcriptional repressor NrdR (152 aa).

The segment at 3-34 is a zinc-finger region; it reads CAFCGNPDTQVIDSRVSEDGSSIRRRRRCPAC. Residues 49–139 enclose the ATP-cone domain; the sequence is PQVVKTAGHR…VYRSFQDISE (91 aa).

Belongs to the NrdR family. The cofactor is Zn(2+).

In terms of biological role, negatively regulates transcription of bacterial ribonucleotide reductase nrd genes and operons by binding to NrdR-boxes. The polypeptide is Transcriptional repressor NrdR (Chromobacterium violaceum (strain ATCC 12472 / DSM 30191 / JCM 1249 / CCUG 213 / NBRC 12614 / NCIMB 9131 / NCTC 9757 / MK)).